Reading from the N-terminus, the 331-residue chain is Neuropeptides B/W receptor type 1 (331 aa).

Residues 1–43 (MHNASYWGPERANTSCPAPAPTLGCPNASGPAPPLPPPLAVAV) lie on the Extracellular side of the membrane. N-linked (GlcNAc...) asparagine glycans are attached at residues Asn3, Asn13, and Asn27. Residues 44–66 (PVVYAVICAVGLAGNSAVLFVLL) form a helical membrane-spanning segment. Residues 67-75 (RAPRRKTVT) are Cytoplasmic-facing. Residues 76-100 (NLFILNLAVADELFTLVPPVNIADF) form a helical membrane-spanning segment. At 101-115 (LLRRWPFGELLCKLV) the chain is on the extracellular side. Cys112 and Cys191 are joined by a disulfide. The chain crosses the membrane as a helical span at residues 116–135 (VAVDQYNTFSSLYFLTVMSA). Residues 136–160 (DRYLVVLATAESRRVAGRTYGAARA) are Cytoplasmic-facing. Residues 161–180 (VSLAVWGVATLVVLPFAVFA) form a helical membrane-spanning segment. The Extracellular portion of the chain corresponds to 181–205 (RLDEEQGRRQCVLVFPQPEALWWRA). The helical transmembrane segment at 206–227 (SRLYTLVLGFAIPVSTICVLYT) threads the bilayer. At 228–251 (SLLCRLRAIRLDSHAKALDRAKKR) the chain is on the cytoplasmic side. Residues 252–276 (VTVLVVAILAVCLLVWTPYHLSTVV) traverse the membrane as a helical segment. Residues 277–286 (ALTTDLPQTP) lie on the Extracellular side of the membrane. A helical transmembrane segment spans residues 287 to 301 (LVIAVSYFITSLSYA). Over 302-331 (NSCLNPFLYAFLDDSFRRSLRQLLACRTTS) the chain is Cytoplasmic.

This sequence belongs to the G-protein coupled receptor 1 family.

The protein localises to the cell membrane. Functionally, interacts specifically with a number of opioid ligands. Receptor for neuropeptides B and W, which may be involved in neuroendocrine system regulation, food intake and the organization of other signals. The chain is Neuropeptides B/W receptor type 1 (NPBWR1) from Bos taurus (Bovine).